We begin with the raw amino-acid sequence, 492 residues long: MSKKLNDQELVRLDKLNRLIESKQNPYEVTKVANTHNTKSLKEKYDQFSKEQLAEMQLDKPITVSGRVILIRRTFILIQDFHSELQLYINKNKQPDLFKYFNDYLDLGDVVCATGKPMKTNTNELSLDLESLKIISKSLRVPPEKFHGIADEEIRSRKRYLDLVYNKESKERFVYRSKIIAAMRQYFNENGFLEVETPFLHAQIGGAAAKPFVTRYNALDRDYYLRIAPELPLKKLIVGSFEKIYEIGKCFRNEGMDSTHNPEFTSVETYVAYVDYIYMMELTEAIIKYIAKAIGISHTNIKNETIDWNKPFKRIKMTELVKQETGIDFTQVKKIDQALDLAKKHKVHVKEHEKTIGHIINLFFEEFCEKKLVEPTFVTHHPVEISPLSKLDYSDPRYTERFELFAFGKELANGFSELNDPIDQRQRFEKQLEEKQKGNDEASEMDEDFLEALENGLPPTGGLGIGVDRLVMMLTGTTSIRDILFFPHVREE.

Positions 403 and 410 each coordinate Mg(2+).

It belongs to the class-II aminoacyl-tRNA synthetase family. In terms of assembly, homodimer. The cofactor is Mg(2+).

It is found in the cytoplasm. The enzyme catalyses tRNA(Lys) + L-lysine + ATP = L-lysyl-tRNA(Lys) + AMP + diphosphate. In Mycoplasmoides gallisepticum (strain R(low / passage 15 / clone 2)) (Mycoplasma gallisepticum), this protein is Lysine--tRNA ligase.